Consider the following 470-residue polypeptide: Cytochrome P450 monooxygenase sirC (470 aa).

Residues 12–34 form a helical membrane-spanning segment; it reads LRGMVVGTIMLLCYRYGLALSIL. The N-linked (GlcNAc...) asparagine glycan is linked to N399. C410 serves as a coordination point for heme.

This sequence belongs to the cytochrome P450 family. The cofactor is heme.

It is found in the membrane. The protein operates within mycotoxin biosynthesis. Cytochrome P450 monooxygenase; part of the gene cluster that mediates the biosynthesis of sirodesmin PL, an epipolythiodioxopiperazine (ETP) characterized by a disulfide bridged cyclic dipeptide and that acts as a phytotoxin which is involved in the blackleg didease of canola. SirD catalyzes the O-prenylation of L-tyrosine (L-Tyr) in the presence of dimethylallyl diphosphate (DMAPP) to yield 4-O-dimethylallyl-L-Tyr, and therefore represents probably the first pathway-specific enzyme in the biosynthesis of sirodesmin PL. 4-O-dimethylallyl-L-Tyr, then undergoes condensation with L-Ser in a reaction catalyzed by the non-ribosomal peptide synthase sirP to form the diketopiperazine (DKP) backbone. Further bishydroxylation of the DKP performed by the cytochrome P450 monooxygenase sirC leads to the production of the intermediate phomamide. This step is essential to form the reactive thiol group required for toxicity of sirodesmin PL. The next steps of sirodesmin biosynthesis are not well understood yet, but some predictions could be made from intermediate compounds identification. Phomamide is converted into phomalizarine via oxidation, probably by sirT. Further oxidation, methylation (by sirM or sirN) and reduction steps convert phomalizarine to deacetyl sirodesmin. Finally, acetyltransferase sirH probably acetylates deacetyl sirodesmin to produce sirodesmin PL. The polypeptide is Cytochrome P450 monooxygenase sirC (Leptosphaeria maculans (Blackleg fungus)).